Reading from the N-terminus, the 508-residue chain is Heat shock 70 kDa protein 14 (508 aa).

Belongs to the heat shock protein 70 family. As to quaternary structure, component of ribosome-associated complex (RAC).

The protein localises to the cytoplasm. It is found in the cytosol. Its function is as follows. Component of the ribosome-associated complex (RAC), a complex involved in folding or maintaining nascent polypeptides in a folding-competent state. This chain is Heat shock 70 kDa protein 14 (hspa14), found in Xenopus tropicalis (Western clawed frog).